The primary structure comprises 338 residues: Ketol-acid reductoisomerase (NADP(+)) (338 aa).

A KARI N-terminal Rossmann domain is found at 1-181; it reads MKVFYDKDAD…GGGRAGIIET (181 aa). NADP(+)-binding positions include 24-27, R47, and S52; that span reads YGSQ. The active site involves H107. An NADP(+)-binding site is contributed by G133. Residues 182-327 form the KARI C-terminal knotted domain; the sequence is NFREETETDL…SKLRAMMPWI (146 aa). 4 residues coordinate Mg(2+): D190, E194, E226, and E230. Position 251 (S251) interacts with substrate.

It belongs to the ketol-acid reductoisomerase family. It depends on Mg(2+) as a cofactor.

It carries out the reaction (2R)-2,3-dihydroxy-3-methylbutanoate + NADP(+) = (2S)-2-acetolactate + NADPH + H(+). The enzyme catalyses (2R,3R)-2,3-dihydroxy-3-methylpentanoate + NADP(+) = (S)-2-ethyl-2-hydroxy-3-oxobutanoate + NADPH + H(+). Its pathway is amino-acid biosynthesis; L-isoleucine biosynthesis; L-isoleucine from 2-oxobutanoate: step 2/4. It participates in amino-acid biosynthesis; L-valine biosynthesis; L-valine from pyruvate: step 2/4. Involved in the biosynthesis of branched-chain amino acids (BCAA). Catalyzes an alkyl-migration followed by a ketol-acid reduction of (S)-2-acetolactate (S2AL) to yield (R)-2,3-dihydroxy-isovalerate. In the isomerase reaction, S2AL is rearranged via a Mg-dependent methyl migration to produce 3-hydroxy-3-methyl-2-ketobutyrate (HMKB). In the reductase reaction, this 2-ketoacid undergoes a metal-dependent reduction by NADPH to yield (R)-2,3-dihydroxy-isovalerate. The polypeptide is Ketol-acid reductoisomerase (NADP(+)) (Burkholderia thailandensis (strain ATCC 700388 / DSM 13276 / CCUG 48851 / CIP 106301 / E264)).